We begin with the raw amino-acid sequence, 1199 residues long: DNA-directed RNA polymerase subunit beta' (1199 aa).

Zn(2+) contacts are provided by cysteine 60, cysteine 62, cysteine 75, and cysteine 78. Mg(2+) contacts are provided by aspartate 449, aspartate 451, and aspartate 453. 4 residues coordinate Zn(2+): cysteine 818, cysteine 892, cysteine 899, and cysteine 902.

It belongs to the RNA polymerase beta' chain family. In terms of assembly, the RNAP catalytic core consists of 2 alpha, 1 beta, 1 beta' and 1 omega subunit. When a sigma factor is associated with the core the holoenzyme is formed, which can initiate transcription. It depends on Mg(2+) as a cofactor. The cofactor is Zn(2+).

The catalysed reaction is RNA(n) + a ribonucleoside 5'-triphosphate = RNA(n+1) + diphosphate. Functionally, DNA-dependent RNA polymerase catalyzes the transcription of DNA into RNA using the four ribonucleoside triphosphates as substrates. This is DNA-directed RNA polymerase subunit beta' from Bacillus velezensis (strain DSM 23117 / BGSC 10A6 / LMG 26770 / FZB42) (Bacillus amyloliquefaciens subsp. plantarum).